We begin with the raw amino-acid sequence, 2042 residues long: Protein mini spindles (2042 aa).

TOG regions lie at residues 1-229 (MAED…VEPS) and 267-505 (MDLL…KVAG). The interval 1-505 (MAEDTEYKKL…KAEIKIKVAG (505 aa)) is binds tubulin. Promotes microtubule polymerization stretches follow at residues 1–516 (MAED…ASAP) and 581–1080 (TPEE…EKAR). 7 HEAT repeats span residues 120–157 (EKQE…EFGH), 160–197 (IGVK…WIGA), 270–311 (LDPV…DHPK), 315–353 (GEYG…GLAK), 357–394 (NYAS…STSL), 396–433 (AQQE…TALN), and 440–478 (LTTS…VTPL). The association with microtubule lattice stretch occupies residues 498–821 (EIKIKVAGPK…PKPVRGVQRS (324 aa)). Positions 506–572 (PKKETRPASA…PTAALKAGGK (67 aa)) are disordered. Positions 513-531 (ASAPTAKAAAPAKTVAGSV) are enriched in low complexity. The tract at residues 581-814 (TPEELQEKSE…KNVGEKPPKP (234 aa)) is TOG 3. 4 HEAT repeats span residues 587-624 (EKSE…SGFD), 625-662 (AKQA…IIRS), 672-710 (TTVD…LEYV), and 745-782 (LQPK…YMGK). The disordered stretch occupies residues 804–849 (DKNVGEKPPKPVRGVQRSSGGTAGNSPDNEDDDGGAAGEEEPINMA). The segment covering 819 to 830 (QRSSGGTAGNSP) has biased composition (polar residues). Residues 831–845 (DNEDDDGGAAGEEEP) show a composition bias toward acidic residues. 2 TOG regions span residues 849–1087 (ADLL…PVKP) and 1179–1415 (TELL…KPTP). HEAT repeat units follow at residues 856-893 (DIAP…EARL), 896-933 (PSIG…AMGA), 937-974 (NHVR…KGGY), and 1017-1054 (EDIH…HLGF). The interval 1083–1140 (LPVKPLPKGKHQAPIPEEPKLKTVRGGGAGGAPGIQKSATARVAGGQDKQVPARKKDE) is disordered. An association with microtubule lattice region spans residues 1099 to 1428 (EEPKLKTVRG…VDVPAPQRHD (330 aa)). HEAT repeat units lie at residues 1205 to 1242 (RYHL…RFYD), 1272 to 1309 (NEGS…VFPF), 1311 to 1344 (KVFG…SYGM), and 1346 to 1383 (ICPQ…LSGE). Disordered stretches follow at residues 1407 to 1455 (AKKT…TFDQ) and 1940 to 1959 (NAGS…NGPD). The segment covering 1940 to 1957 (NAGSTQDNRTDVNYQNNG) has biased composition (polar residues).

It belongs to the TOG/XMAP215 family. In terms of assembly, interacts with tacc, dgt6. Interacts with mv. Interacts with Patronin.

The protein resides in the cytoplasm. The protein localises to the cytoskeleton. It is found in the microtubule organizing center. It localises to the centrosome. Its subcellular location is the spindle. The protein resides in the perinuclear region. Its function is as follows. Binds to the plus end of microtubules and regulates microtubule dynamics and microtubule organization. Function in neurons is essential for adult survival, and is important for climbing behavior and activity. Promotes cytoplasmic microtubule nucleation and elongation. May act as a microtubule antipause factor that rapidly catalyzes the transition from pause to either growth or shrinkage. Involved in mitotic spindle elongation. Involved in the establishment of cell polarity and mitotic spindle orientation in neuroblasts. Required for maintaining the bipolarity of acentrosomal meiotic spindles; the function is dependent on tacc and involves ncd. Involved in oocyte microtubule cytoskeleton organization and bicoid mRNA localization. Seems to be involved in elongation of kinetochore-derived microtubule fibers. In fat body cells, essential component of perinuclear non-centrosomal microtubule-organizing centers (ncMTOCs) which function to accommodate the organization of microtubule (MT) networks to control nuclear positioning and dynein motor-based retrograde endosomal trafficking. Within the ncMTOCs, Msp300 and shot anchors the ncMTOC at the nuclear surface and recruits the MT minus-end regulators Patronin and Nin for assembly, anchoring and/or stabilization of circumferential and radial MTs at the ncMTOCs. Patronin, and perhaps Nin, then recruits msps to the ncMTOC where it is required for the gamma-tubulin-independent elongation and assembly of radial MTs. In Drosophila melanogaster (Fruit fly), this protein is Protein mini spindles (msps).